The chain runs to 413 residues: Methylaspartate ammonia-lyase (413 aa).

Gln172 serves as a coordination point for (2S,3S)-3-methyl-L-aspartate. Positions 238, 273, and 307 each coordinate Mg(2+). Gln329 is a binding site for (2S,3S)-3-methyl-L-aspartate. Lys331 acts as the Proton acceptor in catalysis. 360–361 lines the (2S,3S)-3-methyl-L-aspartate pocket; sequence TC.

Belongs to the methylaspartate ammonia-lyase family. Homodimer. It depends on Mg(2+) as a cofactor.

The enzyme catalyses (2S,3S)-3-methyl-L-aspartate = mesaconate + NH4(+). The protein operates within amino-acid degradation; L-glutamate degradation via mesaconate pathway; acetate and pyruvate from L-glutamate: step 2/4. Its function is as follows. Involved in the methylaspartate cycle. Catalyzes the formation of the alpha,beta-unsaturated bond by the reversible anti elimination of ammonia from L-threo-beta-methylaspartate (L-threo-(2S,3S)-3-methylaspartate) to give mesaconate. The protein is Methylaspartate ammonia-lyase of Citrobacter amalonaticus.